Here is a 371-residue protein sequence, read N- to C-terminus: Cysteine proteinase 1 (371 aa).

An N-terminal signal peptide occupies residues 1 to 18 (MAHRVLLLLSLASAAAVA). A propeptide spans 19–136 (AAVDAEDPLI…HEAPVLPTDG (118 aa)) (activation peptide). 2 cysteine pairs are disulfide-bonded: Cys158–Cys208 and Cys192–Cys241. Cys161 is an active-site residue. A glycan (N-linked (GlcNAc...) asparagine) is linked at Asn254. Cys297 and Cys354 form a disulfide bridge. Active-site residues include His303 and Asn330.

The protein belongs to the peptidase C1 family. Expressed during the late stages of seed ripening, in mature seeds and during germination.

Involved in the degradation of the storage protein zein. May play a role in proteolysis during emergencies. The chain is Cysteine proteinase 1 (CCP1) from Zea mays (Maize).